Consider the following 852-residue polypeptide: DNA repair protein rhp54 (852 aa).

2 short sequence motifs (nuclear localization signal) span residues K35–L51 and K178–K181. A compositionally biased stretch (basic and acidic residues) spans N187–S205. Positions N187–S208 are disordered. A Helicase ATP-binding domain is found at G281–G459. D294–T301 lines the ATP pocket. Positions D410–H413 match the DEGH box motif. Positions V614–E767 constitute a Helicase C-terminal domain.

This sequence belongs to the SNF2/RAD54 helicase family. In terms of assembly, homohexamer. Interacts with rhp51.

It localises to the nucleus. The enzyme catalyses ATP + H2O = ADP + phosphate + H(+). Plays an essential role in homologous recombination (HR) which is a major pathway for repairing DNA double-strand breaks (DSBs), single-stranded DNA (ssDNA) gaps, and stalled or collapsed replication forks. Acts as a molecular motor during the homology search and guides RAD51 ssDNA along a donor dsDNA thereby changing the homology search from the diffusion-based mechanism to a motor-guided mechanism. Plays also an essential role in RAD51-mediated synaptic complex formation which consists of three strands encased in a protein filament formed once homology is recognized. Once DNA strand exchange occured, dissociates RAD51 from nucleoprotein filaments formed on dsDNA. This Schizosaccharomyces pombe (strain 972 / ATCC 24843) (Fission yeast) protein is DNA repair protein rhp54 (rhp54).